Reading from the N-terminus, the 336-residue chain is MPAYDNTSSVSGGDQTVCVTGAGGFIASWLVKLLLERGYTVRGTVRNPEDPKNGHLKELEGARERLTLHKVDLLDLQSIQSVVHGCHGVFHTASPVTDNPDEMLEPAVNGTKNVIIASAEAKVRRVVFTSSIGTVYMDPNTSRDVVVDESYWSDLEHCKNTKNWYCYGKTVAEQSAWDIAKENQVDLVVVNPVVVLGPLLQPTINASTIHILKYLNGAAKTYVNATQSYVHVKDVALAHLLVYETNSASGRYICCETALHRGEVVEILAKYFPEYPLPTKCSDEKNPRVKPYKFSNQKLKDLGLEFTPVKQCLYDTVRSLQEKGHLPIPPMQEDSA.

Residues 21 to 27 (GAGGFIA), Arg46, Lys52, 72 to 73 (DL), 92 to 94 (TAS), Tyr165, Lys169, 192 to 195 (PVVV), and Ser207 each bind NADP(+). Cys158 and Cys166 are disulfide-bonded. Catalysis depends on Lys169, which acts as the Proton donor.

This sequence belongs to the NAD(P)-dependent epimerase/dehydratase family. Dihydroflavonol-4-reductase subfamily. In terms of processing, the formation of a reversible disulfide bond reduces activity by perturbing the positioning of nearby catalytic residues. Mainly expressed in roots and stems, especially at the second internode and, to a lower extent, in leaves and flowers. Localized in vascular elements, with weaker expression in the interfascicular (xylem fiber) region.

The protein resides in the cytoplasm. The catalysed reaction is (E)-coniferaldehyde + NADP(+) + CoA = (E)-feruloyl-CoA + NADPH + H(+). The enzyme catalyses (E)-4-coumaraldehyde + NADP(+) + CoA = (E)-4-coumaroyl-CoA + NADPH + H(+). It carries out the reaction (E)-sinapaldehyde + NADP(+) + CoA = (E)-sinapoyl-CoA + NADPH + H(+). It catalyses the reaction (E)-cinnamaldehyde + NADP(+) + CoA = (E)-cinnamoyl-CoA + NADPH + H(+). The catalysed reaction is (E)-caffeyl aldehyde + NADP(+) + CoA = (E)-caffeoyl-CoA + NADPH + H(+). The protein operates within aromatic compound metabolism; phenylpropanoid biosynthesis. Its function is as follows. Involved in the latter stages of lignin biosynthesis. Catalyzes one of the last steps of monolignol biosynthesis, the conversion of cinnamoyl-CoAs into their corresponding cinnamaldehydes. Mediates the conversion of caffeoyl-CoA and coumaroyl-CoA to caffaldehyde and coumaraldehyde, respectively. Also active, with a lower efficiency, toward feruloyl-CoA and sinapoyl-CoA. Involved in the production of floral volatile phenylpropanoids in flowers of fragrant cultivars from cinnamic acid, a common precursor with the anthocyanin biosynthesis pathway involved in flower pigmentation. This Medicago truncatula (Barrel medic) protein is Cinnamoyl-CoA reductase 2.